The sequence spans 148 residues: Ferredoxin-thioredoxin reductase catalytic chain, chloroplastic (148 aa).

The N-terminal 35 residues, 1–35 (MKALQASTSYSFFSKSSSATLQRRTHRPQCVILSK), are a transit peptide targeting the chloroplast. C87 contacts [4Fe-4S] cluster. The active-site Nucleophile is C89. A disulfide bond links C89 and C119. [4Fe-4S] cluster is bound by residues C106, C108, and C117.

Belongs to the ferredoxin thioredoxin reductase beta subunit family. Heterodimer of subunit A (variable subunit) and subunit B (catalytic subunit). Heterodimeric FTR forms a complex with ferredoxin and thioredoxin. [4Fe-4S] cluster is required as a cofactor.

It localises to the plastid. Its subcellular location is the chloroplast. The catalysed reaction is [thioredoxin]-disulfide + 2 reduced [2Fe-2S]-[ferredoxin] + 2 H(+) = [thioredoxin]-dithiol + 2 oxidized [2Fe-2S]-[ferredoxin]. Catalytic subunit of the ferredoxin-thioredoxin reductase (FTR), which catalyzes the two-electron reduction of thioredoxins by the electrons provided by reduced ferredoxin. The protein is Ferredoxin-thioredoxin reductase catalytic chain, chloroplastic of Spinacia oleracea (Spinach).